A 110-amino-acid chain; its full sequence is Insulin (110 aa).

The first 24 residues, 1–24 (MALWMHLLTVLALLALWGPNTGQA), serve as a signal peptide directing secretion. 3 cysteine pairs are disulfide-bonded: cysteine 31-cysteine 96, cysteine 43-cysteine 109, and cysteine 95-cysteine 100. The propeptide at 57 to 87 (ELEDPQVEQTELGMGLGAGGLQPLALEMALQ) is c peptide.

This sequence belongs to the insulin family. In terms of assembly, heterodimer of a B chain and an A chain linked by two disulfide bonds.

It is found in the secreted. Functionally, insulin decreases blood glucose concentration. It increases cell permeability to monosaccharides, amino acids and fatty acids. It accelerates glycolysis, the pentose phosphate cycle, and glycogen synthesis in liver. This chain is Insulin (INS), found in Cavia porcellus (Guinea pig).